The primary structure comprises 299 residues: Phosphoribosylaminoimidazole-succinocarboxamide synthase (299 aa).

The disordered stretch occupies residues 259-279 (PESGWDRKSEQPPPPLPQHVV).

This sequence belongs to the SAICAR synthetase family.

The enzyme catalyses 5-amino-1-(5-phospho-D-ribosyl)imidazole-4-carboxylate + L-aspartate + ATP = (2S)-2-[5-amino-1-(5-phospho-beta-D-ribosyl)imidazole-4-carboxamido]succinate + ADP + phosphate + 2 H(+). Its pathway is purine metabolism; IMP biosynthesis via de novo pathway; 5-amino-1-(5-phospho-D-ribosyl)imidazole-4-carboxamide from 5-amino-1-(5-phospho-D-ribosyl)imidazole-4-carboxylate: step 1/2. The chain is Phosphoribosylaminoimidazole-succinocarboxamide synthase from Streptomyces avermitilis (strain ATCC 31267 / DSM 46492 / JCM 5070 / NBRC 14893 / NCIMB 12804 / NRRL 8165 / MA-4680).